We begin with the raw amino-acid sequence, 217 residues long: tRNA (guanine-N(7)-)-methyltransferase (217 aa).

Residues E44, E69, D96, and D118 each coordinate S-adenosyl-L-methionine. D118 is a catalytic residue. Residues K122, D154, and 191–194 each bind substrate; that span reads TEYE.

The protein belongs to the class I-like SAM-binding methyltransferase superfamily. TrmB family.

It carries out the reaction guanosine(46) in tRNA + S-adenosyl-L-methionine = N(7)-methylguanosine(46) in tRNA + S-adenosyl-L-homocysteine. Its pathway is tRNA modification; N(7)-methylguanine-tRNA biosynthesis. Catalyzes the formation of N(7)-methylguanine at position 46 (m7G46) in tRNA. This chain is tRNA (guanine-N(7)-)-methyltransferase, found in Bacillus mycoides (strain KBAB4) (Bacillus weihenstephanensis).